A 122-amino-acid polypeptide reads, in one-letter code: Holo-[acyl-carrier-protein] synthase (122 aa).

The Mg(2+) site is built by Asp-8 and Glu-56.

The protein belongs to the P-Pant transferase superfamily. AcpS family. Mg(2+) is required as a cofactor.

It localises to the cytoplasm. The enzyme catalyses apo-[ACP] + CoA = holo-[ACP] + adenosine 3',5'-bisphosphate + H(+). Transfers the 4'-phosphopantetheine moiety from coenzyme A to a Ser of acyl-carrier-protein. The polypeptide is Holo-[acyl-carrier-protein] synthase (Salinispora arenicola (strain CNS-205)).